The following is a 365-amino-acid chain: Succinyl-diaminopimelate desuccinylase (365 aa).

His-64 contacts Zn(2+). Asp-66 is a catalytic residue. Zn(2+) is bound at residue Asp-95. Glu-125 acts as the Proton acceptor in catalysis. Zn(2+)-binding residues include Glu-126, Glu-154, and His-339.

It belongs to the peptidase M20A family. DapE subfamily. Homodimer. It depends on Zn(2+) as a cofactor. Co(2+) is required as a cofactor.

It catalyses the reaction N-succinyl-(2S,6S)-2,6-diaminopimelate + H2O = (2S,6S)-2,6-diaminopimelate + succinate. It functions in the pathway amino-acid biosynthesis; L-lysine biosynthesis via DAP pathway; LL-2,6-diaminopimelate from (S)-tetrahydrodipicolinate (succinylase route): step 3/3. Functionally, catalyzes the hydrolysis of N-succinyl-L,L-diaminopimelic acid (SDAP), forming succinate and LL-2,6-diaminopimelate (DAP), an intermediate involved in the bacterial biosynthesis of lysine and meso-diaminopimelic acid, an essential component of bacterial cell walls. This chain is Succinyl-diaminopimelate desuccinylase, found in Nautilia profundicola (strain ATCC BAA-1463 / DSM 18972 / AmH).